Consider the following 433-residue polypeptide: Metacaspase-1 (433 aa).

Residues M1–P123 form a disordered region. Positions T9–Q44 are enriched in low complexity. Polar residues-rich tracts occupy residues N45–H55 and Q83–Q109. Residues H222 and C278 contribute to the active site.

Belongs to the peptidase C14B family.

Functionally, involved in cell death (apoptosis). The sequence is that of Metacaspase-1 (MCA1) from Kluyveromyces lactis (strain ATCC 8585 / CBS 2359 / DSM 70799 / NBRC 1267 / NRRL Y-1140 / WM37) (Yeast).